Consider the following 720-residue polypeptide: Fatty acid CoA ligase Acsl3 (720 aa).

A helical; Signal-anchor for type III membrane protein transmembrane segment spans residues 21 to 41 (ILLYFIHFIISLYTILTYIPF). The Cytoplasmic portion of the chain corresponds to 42–720 (YFLCESKQEK…ADIERMYGRK (679 aa)). Phosphoserine is present on Ser-683.

The protein belongs to the ATP-dependent AMP-binding enzyme family. The cofactor is Mg(2+).

It is found in the mitochondrion outer membrane. Its subcellular location is the peroxisome membrane. The protein localises to the microsome membrane. It localises to the endoplasmic reticulum membrane. It carries out the reaction a long-chain fatty acid + ATP + CoA = a long-chain fatty acyl-CoA + AMP + diphosphate. The enzyme catalyses (E)-hexadec-2-enoate + ATP + CoA = (2E)-hexadecenoyl-CoA + AMP + diphosphate. It catalyses the reaction (5Z,8Z,11Z,14Z)-eicosatetraenoate + ATP + CoA = (5Z,8Z,11Z,14Z)-eicosatetraenoyl-CoA + AMP + diphosphate. The catalysed reaction is 15-hydroxy-(5Z,8Z,11Z,13E)-eicosatetraenoate + ATP + CoA = 15-hydroxy-(5Z,8Z,11Z,13E)-eicosatetraenoyl-CoA + AMP + diphosphate. It carries out the reaction 12-hydroxy-(5Z,8Z,10E,14Z)-eicosatetraenoate + ATP + CoA = 12-hydroxy-(5Z,8Z,10E,14Z)-eicosatetraenoyl-CoA + AMP + diphosphate. The enzyme catalyses 5-hydroxy-(6E,8Z,11Z,14Z)-eicosatetraenoate + ATP + CoA = 5-hydroxy-(6E,8Z,11Z,14Z)-eicosatetraenoyl-CoA + AMP + diphosphate. It catalyses the reaction 14,15-epoxy-(5Z,8Z,11Z)-eicosatrienoate + ATP + CoA = 14,15-epoxy-(5Z,8Z,11Z)-eicosatrienoyl-CoA + AMP + diphosphate. The catalysed reaction is 11,12-epoxy-(5Z,8Z,14Z)-eicosatrienoate + ATP + CoA = 11,12-epoxy-(5Z,8Z,14Z)-eicosatrienoyl-CoA + AMP + diphosphate. It carries out the reaction a medium-chain fatty acid + ATP + CoA = a medium-chain fatty acyl-CoA + AMP + diphosphate. The enzyme catalyses hexadecanoate + ATP + CoA = hexadecanoyl-CoA + AMP + diphosphate. It catalyses the reaction tetradecanoate + ATP + CoA = tetradecanoyl-CoA + AMP + diphosphate. The catalysed reaction is dodecanoate + ATP + CoA = dodecanoyl-CoA + AMP + diphosphate. It carries out the reaction octadecanoate + ATP + CoA = octadecanoyl-CoA + AMP + diphosphate. The enzyme catalyses eicosanoate + ATP + CoA = eicosanoyl-CoA + AMP + diphosphate. It catalyses the reaction (9Z)-octadecenoate + ATP + CoA = (9Z)-octadecenoyl-CoA + AMP + diphosphate. The catalysed reaction is (9Z)-hexadecenoate + ATP + CoA = (9Z)-hexadecenoyl-CoA + AMP + diphosphate. It carries out the reaction (9Z,12Z)-octadecadienoate + ATP + CoA = (9Z,12Z)-octadecadienoyl-CoA + AMP + diphosphate. The enzyme catalyses (9Z,12Z,15Z)-octadecatrienoate + ATP + CoA = (9Z,12Z,15Z)-octadecatrienoyl-CoA + AMP + diphosphate. It catalyses the reaction (4Z,7Z,10Z,13Z,16Z,19Z)-docosahexaenoate + ATP + CoA = (4Z,7Z,10Z,13Z,16Z,19Z)-docosahexaenoyl-CoA + AMP + diphosphate. The catalysed reaction is (5Z,8Z,11Z,14Z,17Z)-eicosapentaenoate + ATP + CoA = (5Z,8Z,11Z,14Z,17Z)-eicosapentaenoyl-CoA + AMP + diphosphate. It carries out the reaction a fatty acid + ATP + CoA = a fatty acyl-CoA + AMP + diphosphate. Functionally, acyl-CoA synthetases (ACSL) activates long-chain fatty acids for both synthesis of cellular lipids, and degradation via beta-oxidation. ACSL3 is required for the incorporation of fatty acids into phosphatidylcholine, the major phospholipid located on the surface of VLDL (very low density lipoproteins). Has mainly an anabolic role in energy metabolism. Mediates hepatic lipogenesis. Preferentially uses myristate, laurate, arachidonate and eicosapentaenoate as substrates. Both isoforms exhibit the same level of activity. This Mus musculus (Mouse) protein is Fatty acid CoA ligase Acsl3.